Reading from the N-terminus, the 422-residue chain is Probable glucuronosyltransferase Os01g0926400 (422 aa).

At Met-1–Gly-8 the chain is on the cytoplasmic side. A helical; Signal-anchor for type II membrane protein membrane pass occupies residues Val-9–Ala-29. Over Ala-30–Trp-422 the chain is Lumenal. N-linked (GlcNAc...) asparagine glycosylation occurs at Asn-149.

This sequence belongs to the glycosyltransferase 47 family.

The protein resides in the golgi apparatus membrane. Involved in the synthesis of glucuronoxylan hemicellulose in secondary cell walls. This Oryza sativa subsp. japonica (Rice) protein is Probable glucuronosyltransferase Os01g0926400.